Reading from the N-terminus, the 318-residue chain is Glutathione synthetase (318 aa).

In terms of domain architecture, ATP-grasp spans 124-310; that stretch reads EKLFTAWFPE…ITGKLMDAIE (187 aa). An ATP-binding site is contributed by 150-207; the sequence is FREQHGDVILKPLDGMGGASIFRVKEGDPNLSVIIETLTNHGQNYCMAQTFVPDISNG. Mg(2+) is bound by residues Glu281 and Asn283.

Belongs to the prokaryotic GSH synthase family. It depends on Mg(2+) as a cofactor. Requires Mn(2+) as cofactor.

It carries out the reaction gamma-L-glutamyl-L-cysteine + glycine + ATP = glutathione + ADP + phosphate + H(+). The protein operates within sulfur metabolism; glutathione biosynthesis; glutathione from L-cysteine and L-glutamate: step 2/2. In Vibrio cholerae serotype O1 (strain ATCC 39315 / El Tor Inaba N16961), this protein is Glutathione synthetase.